We begin with the raw amino-acid sequence, 339 residues long: Malate dehydrogenase 3, cytoplasmic (339 aa).

Residues 22 to 23, Asp49, and Gly96 contribute to the NAD(+) site; that span reads NI. Arg105 contributes to the oxaloacetate binding site. Positions 119 and 138 each coordinate NAD(+). Residues Asn138, Arg169, His194, and Ser249 each coordinate oxaloacetate. Residue His194 is the Proton acceptor of the active site.

Belongs to the LDH/MDH superfamily. MDH type 2 family. Expressed in rosette leaves at low levels.

The protein localises to the cytoplasm. The catalysed reaction is (S)-malate + NAD(+) = oxaloacetate + NADH + H(+). Functionally, catalyzes a reversible NAD-dependent dehydrogenase reaction involved in central metabolism and redox homeostasis between organelle compartments. The protein is Malate dehydrogenase 3, cytoplasmic of Arabidopsis thaliana (Mouse-ear cress).